Here is a 217-residue protein sequence, read N- to C-terminus: CASP-like protein UU4 (217 aa).

The span at Met-1–Glu-11 shows a compositional bias: basic and acidic residues. The disordered stretch occupies residues Met-1–Asn-21. The Cytoplasmic portion of the chain corresponds to Met-1–Gly-61. The chain crosses the membrane as a helical span at residues Leu-62–Ala-82. The Extracellular segment spans residues Ser-83–Ser-98. Residues Phe-99–Val-119 form a helical membrane-spanning segment. Residues Met-120–Gln-141 are Cytoplasmic-facing. A helical membrane pass occupies residues Leu-142–Asn-162. The Extracellular portion of the chain corresponds to Arg-163–Glu-187. A helical transmembrane segment spans residues Ala-188–Val-208. At Tyr-209–Leu-217 the chain is on the cytoplasmic side.

This sequence belongs to the Casparian strip membrane proteins (CASP) family. In terms of assembly, homodimer and heterodimers.

The protein resides in the cell membrane. The sequence is that of CASP-like protein UU4 from Physcomitrium patens (Spreading-leaved earth moss).